The chain runs to 119 residues: Holo-[acyl-carrier-protein] synthase (119 aa).

Mg(2+) contacts are provided by aspartate 7 and glutamate 56.

The protein belongs to the P-Pant transferase superfamily. AcpS family. Mg(2+) serves as cofactor.

It is found in the cytoplasm. The enzyme catalyses apo-[ACP] + CoA = holo-[ACP] + adenosine 3',5'-bisphosphate + H(+). Its function is as follows. Transfers the 4'-phosphopantetheine moiety from coenzyme A to a Ser of acyl-carrier-protein. This chain is Holo-[acyl-carrier-protein] synthase, found in Chlamydia trachomatis serovar D (strain ATCC VR-885 / DSM 19411 / UW-3/Cx).